A 734-amino-acid polypeptide reads, in one-letter code: Photosystem I P700 chlorophyll a apoprotein A2 (734 aa).

The next 8 membrane-spanning stretches (helical) occupy residues 46-69, 135-158, 175-199, 273-291, 330-353, 369-395, 417-439, and 517-535; these read IFASHFGQLAIIFLWTSGNLFHVA, LYTGALFLLFLSAISLIAGWLHLQ, LNHHLSGLFGVSSLAWTGHLVHVAI, IAHHHLAIAFLFLVAGHMY, IHFQLGLALASLGVITSLVAQHMY, AALYTHHQYIAGFIMTGAFAHGAIFFI, AIKSHLSWVSLFLGFHTLGLYVH, and FLVHHAIALGLHTTTLILV. 2 residues coordinate [4Fe-4S] cluster: Cys559 and Cys568. Helical transmembrane passes span 575–596 and 643–665; these read AFYLAVFWMLNTIGWVTFYWHW and LSVWAWMFLFGHLVWATGFMFLI. Positions 654, 662, and 670 each coordinate chlorophyll a. Trp671 serves as a coordination point for phylloquinone. Residues 707–727 traverse the membrane as a helical segment; sequence LVGLAHFSVGYIFTYAAFLIA.

This sequence belongs to the PsaA/PsaB family. As to quaternary structure, the PsaA/B heterodimer binds the P700 chlorophyll special pair and subsequent electron acceptors. PSI consists of a core antenna complex that captures photons, and an electron transfer chain that converts photonic excitation into a charge separation. The eukaryotic PSI reaction center is composed of at least 11 subunits. Requires P700 is a chlorophyll a/chlorophyll a' dimer, A0 is one or more chlorophyll a, A1 is one or both phylloquinones and FX is a shared 4Fe-4S iron-sulfur center. as cofactor.

It localises to the plastid. The protein localises to the chloroplast thylakoid membrane. The catalysed reaction is reduced [plastocyanin] + hnu + oxidized [2Fe-2S]-[ferredoxin] = oxidized [plastocyanin] + reduced [2Fe-2S]-[ferredoxin]. In terms of biological role, psaA and PsaB bind P700, the primary electron donor of photosystem I (PSI), as well as the electron acceptors A0, A1 and FX. PSI is a plastocyanin-ferredoxin oxidoreductase, converting photonic excitation into a charge separation, which transfers an electron from the donor P700 chlorophyll pair to the spectroscopically characterized acceptors A0, A1, FX, FA and FB in turn. Oxidized P700 is reduced on the lumenal side of the thylakoid membrane by plastocyanin. The polypeptide is Photosystem I P700 chlorophyll a apoprotein A2 (Drimys granadensis).